The primary structure comprises 489 residues: Rhamnulokinase (489 aa).

13-17 (ASSGR) provides a ligand contact to ATP. Cysteine 68 and cysteine 222 are oxidised to a cystine. Residues glycine 83 and 236–238 (HDT) contribute to the substrate site. Aspartate 237 functions as the Proton acceptor in the catalytic mechanism. Residue threonine 259 coordinates ATP. Asparagine 296 is a binding site for substrate. Position 304 (glutamine 304) interacts with ATP. Cysteines 353 and 370 form a disulfide. Residue glycine 402 participates in ATP binding. Cysteine 413 and cysteine 417 are disulfide-bonded.

The protein belongs to the rhamnulokinase family. The cofactor is Mg(2+).

The catalysed reaction is L-rhamnulose + ATP = L-rhamnulose 1-phosphate + ADP + H(+). It participates in carbohydrate degradation; L-rhamnose degradation; glycerone phosphate from L-rhamnose: step 2/3. Involved in the catabolism of L-rhamnose (6-deoxy-L-mannose). Catalyzes the transfer of the gamma-phosphate group from ATP to the 1-hydroxyl group of L-rhamnulose to yield L-rhamnulose 1-phosphate. The polypeptide is Rhamnulokinase (Salmonella paratyphi B (strain ATCC BAA-1250 / SPB7)).